Here is a 208-residue protein sequence, read N- to C-terminus: Glycerol-3-phosphate acyltransferase (208 aa).

The next 6 membrane-spanning stretches (helical) occupy residues 7–27 (PNIHFYLLAYFIGGIPFGYLL), 63–83 (MMAALTMLLDALKGALVILVA), 86–106 (AGMSVETQWAIAVLAVVGHCF), 123–143 (GVMAVMLPLEAAIGLVVWLVV), 149–169 (ISSLSSLLGLGALLISSFLIH), and 170–190 (PEIPEIGTHAPLLIIAFVIFY).

This sequence belongs to the PlsY family. Probably interacts with PlsX.

Its subcellular location is the cell inner membrane. It catalyses the reaction an acyl phosphate + sn-glycerol 3-phosphate = a 1-acyl-sn-glycero-3-phosphate + phosphate. It functions in the pathway lipid metabolism; phospholipid metabolism. Functionally, catalyzes the transfer of an acyl group from acyl-phosphate (acyl-PO(4)) to glycerol-3-phosphate (G3P) to form lysophosphatidic acid (LPA). This enzyme utilizes acyl-phosphate as fatty acyl donor, but not acyl-CoA or acyl-ACP. The sequence is that of Glycerol-3-phosphate acyltransferase from Wolinella succinogenes (strain ATCC 29543 / DSM 1740 / CCUG 13145 / JCM 31913 / LMG 7466 / NCTC 11488 / FDC 602W) (Vibrio succinogenes).